Reading from the N-terminus, the 141-residue chain is Large ribosomal subunit protein uL11 (141 aa).

This sequence belongs to the universal ribosomal protein uL11 family. Part of the ribosomal stalk of the 50S ribosomal subunit. Interacts with L10 and the large rRNA to form the base of the stalk. L10 forms an elongated spine to which L12 dimers bind in a sequential fashion forming a multimeric L10(L12)X complex. One or more lysine residues are methylated.

Its function is as follows. Forms part of the ribosomal stalk which helps the ribosome interact with GTP-bound translation factors. The polypeptide is Large ribosomal subunit protein uL11 (Lactococcus lactis subsp. lactis (strain IL1403) (Streptococcus lactis)).